The chain runs to 63 residues: Large ribosomal subunit protein uL29 (63 aa).

The protein belongs to the universal ribosomal protein uL29 family.

This chain is Large ribosomal subunit protein uL29, found in Pseudoalteromonas atlantica (strain T6c / ATCC BAA-1087).